The sequence spans 308 residues: uncharacterized protein (308 aa).

NADP(+) is bound by residues leucine 50, aspartate 90, asparagine 117, tyrosine 182, lysine 186, isoleucine 222, and threonine 224. The active-site Proton acceptor is the tyrosine 182. The Lowers pKa of active site Tyr role is filled by lysine 186.

It belongs to the short-chain dehydrogenases/reductases (SDR) family.

This is an uncharacterized protein from Saccharomyces cerevisiae (strain ATCC 204508 / S288c) (Baker's yeast).